Consider the following 338-residue polypeptide: D-erythrose-4-phosphate dehydrogenase (338 aa).

11–12 (RI) contributes to the NAD(+) binding site. Substrate is bound by residues 153–155 (SCT), Arg-199, 212–213 (TK), and Arg-235. Cys-154 (nucleophile) is an active-site residue. Asn-317 contributes to the NAD(+) binding site.

This sequence belongs to the glyceraldehyde-3-phosphate dehydrogenase family. Epd subfamily. As to quaternary structure, homotetramer.

It is found in the cytoplasm. The catalysed reaction is D-erythrose 4-phosphate + NAD(+) + H2O = 4-phospho-D-erythronate + NADH + 2 H(+). The protein operates within cofactor biosynthesis; pyridoxine 5'-phosphate biosynthesis; pyridoxine 5'-phosphate from D-erythrose 4-phosphate: step 1/5. In terms of biological role, catalyzes the NAD-dependent conversion of D-erythrose 4-phosphate to 4-phosphoerythronate. The sequence is that of D-erythrose-4-phosphate dehydrogenase from Shewanella putrefaciens (strain CN-32 / ATCC BAA-453).